A 306-amino-acid chain; its full sequence is ATP synthase gamma chain (306 aa).

Belongs to the ATPase gamma chain family. F-type ATPases have 2 components, CF(1) - the catalytic core - and CF(0) - the membrane proton channel. CF(1) has five subunits: alpha(3), beta(3), gamma(1), delta(1), epsilon(1). CF(0) has three main subunits: a, b and c.

Its subcellular location is the cell membrane. Functionally, produces ATP from ADP in the presence of a proton gradient across the membrane. The gamma chain is believed to be important in regulating ATPase activity and the flow of protons through the CF(0) complex. The protein is ATP synthase gamma chain of Bifidobacterium adolescentis (strain ATCC 15703 / DSM 20083 / NCTC 11814 / E194a).